The primary structure comprises 833 residues: Leucine--tRNA ligase (833 aa).

The short motif at 41–52 (PYPSGAGLHVGH) is the 'HIGH' region element. The 'KMSKS' region motif lies at 610–614 (KMSKS). An ATP-binding site is contributed by lysine 613.

The protein belongs to the class-I aminoacyl-tRNA synthetase family.

The protein resides in the cytoplasm. The catalysed reaction is tRNA(Leu) + L-leucine + ATP = L-leucyl-tRNA(Leu) + AMP + diphosphate. This Streptococcus gordonii (strain Challis / ATCC 35105 / BCRC 15272 / CH1 / DL1 / V288) protein is Leucine--tRNA ligase.